We begin with the raw amino-acid sequence, 371 residues long: Bifunctional enzyme IspD/IspF (371 aa).

A 2-C-methyl-D-erythritol 4-phosphate cytidylyltransferase region spans residues 1–212 (MKDITLVLLA…FDFTPASGTI (212 aa)). A 2-C-methyl-D-erythritol 2,4-cyclodiphosphate synthase region spans residues 213-371 (FTGNGFDVHA…NLGYFDWRKF (159 aa)). A divalent metal cation contacts are provided by aspartate 219 and histidine 221. 4-CDP-2-C-methyl-D-erythritol 2-phosphate contacts are provided by residues 219–221 (DVH) and 245–246 (HS). Histidine 253 provides a ligand contact to a divalent metal cation. Residues 267 to 269 (DIG), 272 to 276 (FPDTD), 341 to 344 (STTE), phenylalanine 348, and arginine 351 contribute to the 4-CDP-2-C-methyl-D-erythritol 2-phosphate site.

It in the N-terminal section; belongs to the IspD/TarI cytidylyltransferase family. IspD subfamily. The protein in the C-terminal section; belongs to the IspF family. A divalent metal cation is required as a cofactor.

It catalyses the reaction 2-C-methyl-D-erythritol 4-phosphate + CTP + H(+) = 4-CDP-2-C-methyl-D-erythritol + diphosphate. The catalysed reaction is 4-CDP-2-C-methyl-D-erythritol 2-phosphate = 2-C-methyl-D-erythritol 2,4-cyclic diphosphate + CMP. The protein operates within isoprenoid biosynthesis; isopentenyl diphosphate biosynthesis via DXP pathway; isopentenyl diphosphate from 1-deoxy-D-xylulose 5-phosphate: step 2/6. Its pathway is isoprenoid biosynthesis; isopentenyl diphosphate biosynthesis via DXP pathway; isopentenyl diphosphate from 1-deoxy-D-xylulose 5-phosphate: step 4/6. Its function is as follows. Bifunctional enzyme that catalyzes the formation of 4-diphosphocytidyl-2-C-methyl-D-erythritol from CTP and 2-C-methyl-D-erythritol 4-phosphate (MEP) (IspD), and catalyzes the conversion of 4-diphosphocytidyl-2-C-methyl-D-erythritol 2-phosphate (CDP-ME2P) to 2-C-methyl-D-erythritol 2,4-cyclodiphosphate (ME-CPP) with a corresponding release of cytidine 5-monophosphate (CMP) (IspF). This chain is Bifunctional enzyme IspD/IspF, found in Campylobacter hominis (strain ATCC BAA-381 / DSM 21671 / CCUG 45161 / LMG 19568 / NCTC 13146 / CH001A).